A 275-amino-acid polypeptide reads, in one-letter code: DNA repair protein RecO (275 aa).

The tract at residues Met1 to Ser38 is disordered. The segment covering Asp8–Asp24 has biased composition (low complexity).

This sequence belongs to the RecO family.

Its function is as follows. Involved in DNA repair and RecF pathway recombination. In Burkholderia pseudomallei (strain 1710b), this protein is DNA repair protein RecO.